A 1629-amino-acid chain; its full sequence is Ferredoxin-dependent glutamate synthase 2, chloroplastic (1629 aa).

The transit peptide at 1–107 (MALQSPGATG…LEDIISERGA (107 aa)) directs the protein to the chloroplast. The For GATase activity role is filled by C108. Residues 108–507 (CGVGFIANLE…PGMMISVDLE (400 aa)) enclose the Glutamine amidotransferase type-2 domain. Position 1186-1243 (1186-1243 (LAETQKTLIGNGLRERVIIRVDGGFKSGVDVLIAAAMGADEYGFGTLAMIATGCIMAR)) interacts with FMN. Residues C1239, C1245, and C1250 each contribute to the [3Fe-4S] cluster site. The segment at 1599–1629 (SEEDTPEANSDHILKTTTGDEEQVSSTLAEK) is disordered.

The protein belongs to the glutamate synthase family. [3Fe-4S] cluster serves as cofactor. Requires FAD as cofactor. It depends on FMN as a cofactor. Expressed predominantly in roots and slightly in leaves. Low expression in the leaf mesophyll and phloem companion cell-sieve element complex.

The protein localises to the plastid. The protein resides in the chloroplast stroma. The catalysed reaction is 2 oxidized [2Fe-2S]-[ferredoxin] + 2 L-glutamate = L-glutamine + 2 reduced [2Fe-2S]-[ferredoxin] + 2-oxoglutarate + 2 H(+). Its pathway is amino-acid biosynthesis; L-glutamate biosynthesis via GLT pathway; L-glutamate from 2-oxoglutarate and L-glutamine (ferredoxin route): step 1/1. It participates in energy metabolism; nitrogen metabolism. May play a role in primary nitrogen assimilation in roots. Could supply a constitutive level of glutamate to maintain a basal level of protein synthesis. The polypeptide is Ferredoxin-dependent glutamate synthase 2, chloroplastic (GLU2) (Arabidopsis thaliana (Mouse-ear cress)).